Reading from the N-terminus, the 402-residue chain is Serine/threonine transporter SstT (402 aa).

9 helical membrane-spanning segments follow: residues 19–39, 43–63, 86–106, 138–158, 179–199, 212–232, 287–307, 327–347, and 354–374; these read IGVVIGLFLGILVPKASAIGL, LFVGGLKAIAPLLVFTLVISA, TFAAALIAVVVNYIFPLTLIL, AITEANYMSILFWAVIFGLAM, VVKWIINLAPIGIMGLVFTSI, LLILVLVGTMLFVALVVNPII, IPLGAAINMAGAAITINILTL, VVAAVSACGASGVTGGSLLLI, and FGISNDVAMQVVGVGFIVGVI.

It belongs to the dicarboxylate/amino acid:cation symporter (DAACS) (TC 2.A.23) family.

It localises to the cell membrane. The catalysed reaction is L-serine(in) + Na(+)(in) = L-serine(out) + Na(+)(out). It carries out the reaction L-threonine(in) + Na(+)(in) = L-threonine(out) + Na(+)(out). Its function is as follows. Involved in the import of serine and threonine into the cell, with the concomitant import of sodium (symport system). The chain is Serine/threonine transporter SstT from Streptococcus agalactiae serotype III (strain NEM316).